Here is a 161-residue protein sequence, read N- to C-terminus: NAD(P)H-quinone oxidoreductase subunit I, chloroplastic (161 aa).

2 4Fe-4S ferredoxin-type domains span residues 55-84 (GRIHFEFDKCIACEVCVRVCPIDLPIVDWK) and 95-124 (LNYSIDFGICIFCGNCIEYCPTNCLSMTEE). Positions 64, 67, 70, 74, 104, 107, 110, and 114 each coordinate [4Fe-4S] cluster.

It belongs to the complex I 23 kDa subunit family. In terms of assembly, NDH is composed of at least 16 different subunits, 5 of which are encoded in the nucleus. The cofactor is [4Fe-4S] cluster.

It is found in the plastid. The protein localises to the chloroplast thylakoid membrane. It carries out the reaction a plastoquinone + NADH + (n+1) H(+)(in) = a plastoquinol + NAD(+) + n H(+)(out). The catalysed reaction is a plastoquinone + NADPH + (n+1) H(+)(in) = a plastoquinol + NADP(+) + n H(+)(out). NDH shuttles electrons from NAD(P)H:plastoquinone, via FMN and iron-sulfur (Fe-S) centers, to quinones in the photosynthetic chain and possibly in a chloroplast respiratory chain. The immediate electron acceptor for the enzyme in this species is believed to be plastoquinone. Couples the redox reaction to proton translocation, and thus conserves the redox energy in a proton gradient. This Phaseolus vulgaris (Kidney bean) protein is NAD(P)H-quinone oxidoreductase subunit I, chloroplastic.